The sequence spans 1405 residues: DNA-directed RNA polymerase subunit beta' (1405 aa).

Zn(2+) is bound by residues Cys71, Cys73, Cys86, and Cys89. The Mg(2+) site is built by Asp462, Asp464, and Asp466. The Zn(2+) site is built by Cys810, Cys884, Cys891, and Cys894.

Belongs to the RNA polymerase beta' chain family. The RNAP catalytic core consists of 2 alpha, 1 beta, 1 beta' and 1 omega subunit. When a sigma factor is associated with the core the holoenzyme is formed, which can initiate transcription. Requires Mg(2+) as cofactor. Zn(2+) is required as a cofactor.

It catalyses the reaction RNA(n) + a ribonucleoside 5'-triphosphate = RNA(n+1) + diphosphate. Its function is as follows. DNA-dependent RNA polymerase catalyzes the transcription of DNA into RNA using the four ribonucleoside triphosphates as substrates. This chain is DNA-directed RNA polymerase subunit beta', found in Maricaulis maris (strain MCS10) (Caulobacter maris).